We begin with the raw amino-acid sequence, 161 residues long: Phosphopantetheine adenylyltransferase (161 aa).

Ser-11 contributes to the substrate binding site. ATP is bound by residues 11 to 12 (SF) and His-19. Substrate contacts are provided by Lys-43, Leu-75, and Arg-89. ATP is bound by residues 90–92 (GLR), Glu-100, and 125–131 (YSYLSSS).

The protein belongs to the bacterial CoaD family. As to quaternary structure, homohexamer. Mg(2+) is required as a cofactor.

It localises to the cytoplasm. The catalysed reaction is (R)-4'-phosphopantetheine + ATP + H(+) = 3'-dephospho-CoA + diphosphate. It participates in cofactor biosynthesis; coenzyme A biosynthesis; CoA from (R)-pantothenate: step 4/5. Reversibly transfers an adenylyl group from ATP to 4'-phosphopantetheine, yielding dephospho-CoA (dPCoA) and pyrophosphate. This chain is Phosphopantetheine adenylyltransferase, found in Geobacter sp. (strain M21).